We begin with the raw amino-acid sequence, 28 residues long: Potassium channel toxin kappa-KTx 2.9 (28 aa).

Cystine bridges form between C4–C22 and C8–C18.

Belongs to the short scorpion toxin superfamily. Potassium channel inhibitor family. Gamma-KTx 2 subfamily. Post-translationally, contains 2 disulfide bonds. As to expression, expressed by the venom gland.

The protein resides in the secreted. Functionally, reversibly blocks voltage-gated potassium channels Kv1.2/KCNA2 and Kv1.3/KCNA3. This Pandinus imperator (Emperor scorpion) protein is Potassium channel toxin kappa-KTx 2.9.